The sequence spans 335 residues: Glucokinase (335 aa).

Residue 11–16 participates in ATP binding; the sequence is ADIGGT.

This sequence belongs to the bacterial glucokinase family.

The protein resides in the cytoplasm. It catalyses the reaction D-glucose + ATP = D-glucose 6-phosphate + ADP + H(+). The sequence is that of Glucokinase from Xanthomonas axonopodis pv. citri (strain 306).